Reading from the N-terminus, the 261-residue chain is CD40 ligand (261 aa).

Over 1–22 the chain is Cytoplasmic; sequence MVETYHQPAPRSAATGLPVSMK. Residues 23-43 traverse the membrane as a helical; Signal-anchor for type II membrane protein segment; that stretch reads IFMYLLTVFLITQMIGSALFA. Residues 44 to 261 are Extracellular-facing; it reads VYLHRRLDKI…GFTSFGLLKL (218 aa). The 140-residue stretch at 122 to 261 folds into the THD domain; that stretch reads IAAHVISEAS…GFTSFGLLKL (140 aa). A disulfide bridge links Cys-178 with Cys-218. An N-linked (GlcNAc...) asparagine glycan is attached at Asn-240.

The protein belongs to the tumor necrosis factor family. As to quaternary structure, homotrimer. Interacts with CD28. CD40 ligand, soluble form: Exists as either a monomer or a homotrimer. Forms a ternary complex between CD40 and integrins for CD40-CD40LG signaling. Post-translationally, the soluble form derives from the membrane form by proteolytic processing.

It is found in the cell membrane. The protein resides in the cell surface. It localises to the secreted. In terms of biological role, cytokine that acts as a ligand to CD40/TNFRSF5. Costimulates T-cell proliferation and cytokine production. Its cross-linking on T-cells generates a costimulatory signal which enhances the production of IL4 and IL10 in conjunction with the TCR/CD3 ligation and CD28 costimulation. Induces the activation of NF-kappa-B. Induces the activation of kinases MAPK8 and PAK2 in T-cells. Mediates B-cell proliferation in the absence of co-stimulus as well as IgE production in the presence of IL4. Involved in immunoglobulin class switching. Its function is as follows. Acts as a ligand for integrins, specifically ITGA5:ITGB1 and ITGAV:ITGB3; both integrins and the CD40 receptor are required for activation of CD40-CD40LG signaling, which have cell-type dependent effects, such as B-cell activation, NF-kappa-B signaling and anti-apoptotic signaling. The chain is CD40 ligand (CD40LG) from Aotus trivirgatus (Three-striped night monkey).